The following is a 397-amino-acid chain: Serpin B10 (397 aa).

Residues 74–77 carry the Nuclear localization signal motif; the sequence is KKRK.

Belongs to the serpin family. Ov-serpin subfamily.

Its subcellular location is the nucleus. The protein localises to the cytoplasm. In terms of biological role, protease inhibitor that may play a role in the regulation of protease activities during hematopoiesis and apoptosis induced by TNF. May regulate protease activities in the cytoplasm and in the nucleus. The chain is Serpin B10 (SERPINB10) from Sorex araneus (Eurasian common shrew).